The chain runs to 53 residues: ATRPWKCCDRAICTKSFPPMCRCMDMVEQCAATCKKCGPATSDSSRRVCEDXY.

4 disulfide bridges follow: cysteine 8/cysteine 23, cysteine 13/cysteine 21, cysteine 30/cysteine 37, and cysteine 34/cysteine 49.

This sequence belongs to the Bowman-Birk serine protease inhibitor family.

This chain is Bowman-Birk type proteinase inhibitor II-4, found in Triticum aestivum (Wheat).